The primary structure comprises 461 residues: Cysteine--tRNA ligase (461 aa).

Position 29 (Cys-29) interacts with Zn(2+). The 'HIGH' region signature appears at 31 to 41; it reads MTVYDFCHIGH. Zn(2+) is bound by residues Cys-210, His-235, and Glu-239. Positions 267 to 271 match the 'KMSKS' region motif; sequence KMSKS. Lys-270 contacts ATP.

Belongs to the class-I aminoacyl-tRNA synthetase family. As to quaternary structure, monomer. Zn(2+) is required as a cofactor.

The protein localises to the cytoplasm. It catalyses the reaction tRNA(Cys) + L-cysteine + ATP = L-cysteinyl-tRNA(Cys) + AMP + diphosphate. This Ectopseudomonas mendocina (strain ymp) (Pseudomonas mendocina) protein is Cysteine--tRNA ligase.